The following is a 470-amino-acid chain: Neuraminidase (470 aa).

At 1-6 the chain is on the intravirion side; it reads MNPNQK. Residues 7-27 form a helical membrane-spanning segment; sequence IITIGSISIAIGIISLMLQIG. The segment at 11 to 33 is involved in apical transport and lipid raft association; it reads GSISIAIGIISLMLQIGNIISIW. Residues 28–470 lie on the Virion surface side of the membrane; it reads NIISIWASHS…GAELPFTIDK (443 aa). Residues 36 to 90 are hypervariable stalk region; it reads HSIQTGSQNHTGICNQRIITYENSTWVNHTYVNINNTNVVAGKDKTSVTLAGNSS. Residues N44, N58, N63, N70, and N88 are each glycosylated (N-linked (GlcNAc...) asparagine; by host). Positions 91-470 are head of neuraminidase; the sequence is LCSISGWAIY…GAELPFTIDK (380 aa). Intrachain disulfides connect C92-C417, C124-C129, C184-C231, C233-C238, C279-C292, C281-C290, C318-C335, and C421-C447. Residue R118 participates in substrate binding. N146 is a glycosylation site (N-linked (GlcNAc...) asparagine; by host). D151 functions as the Proton donor/acceptor in the catalytic mechanism. Residue R152 participates in substrate binding. N235 is a glycosylation site (N-linked (GlcNAc...) asparagine; by host). 277-278 is a substrate binding site; sequence EE. R293 is a binding site for substrate. Ca(2+)-binding residues include D294, G298, and D324. Residue R368 coordinates substrate. An N-linked (GlcNAc...) asparagine; by host glycan is attached at N386. The active-site Nucleophile is the Y402. N-linked (GlcNAc...) asparagine; by host glycans are attached at residues N434 and N455.

This sequence belongs to the glycosyl hydrolase 34 family. As to quaternary structure, homotetramer. Requires Ca(2+) as cofactor. Post-translationally, N-glycosylated.

It localises to the virion membrane. Its subcellular location is the host apical cell membrane. The catalysed reaction is Hydrolysis of alpha-(2-&gt;3)-, alpha-(2-&gt;6)-, alpha-(2-&gt;8)- glycosidic linkages of terminal sialic acid residues in oligosaccharides, glycoproteins, glycolipids, colominic acid and synthetic substrates.. With respect to regulation, inhibited by the neuraminidase inhibitors zanamivir (Relenza) and oseltamivir (Tamiflu). These drugs interfere with the release of progeny virus from infected cells and are effective against all influenza strains. Resistance to neuraminidase inhibitors is quite rare. Catalyzes the removal of terminal sialic acid residues from viral and cellular glycoconjugates. Cleaves off the terminal sialic acids on the glycosylated HA during virus budding to facilitate virus release. Additionally helps virus spread through the circulation by further removing sialic acids from the cell surface. These cleavages prevent self-aggregation and ensure the efficient spread of the progeny virus from cell to cell. Otherwise, infection would be limited to one round of replication. Described as a receptor-destroying enzyme because it cleaves a terminal sialic acid from the cellular receptors. May facilitate viral invasion of the upper airways by cleaving the sialic acid moieties on the mucin of the airway epithelial cells. Likely to plays a role in the budding process through its association with lipid rafts during intracellular transport. May additionally display a raft-association independent effect on budding. Plays a role in the determination of host range restriction on replication and virulence. Sialidase activity in late endosome/lysosome traffic seems to enhance virus replication. In Influenza A virus (strain A/New Zealand:South Canterbury/35/2000 H1N1), this protein is Neuraminidase.